Consider the following 467-residue polypeptide: MASLQFHGNVDADIRYDISLDPARESNLFRLLMGLQLANGTKPSPRLPKWWPKRLEMIGKVLPKAYCSMVIFTSLHLGVLFTKTTLDVLPTGELQAITDALTMTIIYFFTGYGTIYWCLRSRRLLAYMEHMNREYRHHSLAGVTFVSSHAAFRMSRNFTVVWIMSCLLGVISWGVSPLMLGIRMLPLQCWYPFDALGPGTYTAVYATQLFGQIMVGMTFGFGGSLFVTLSLLLLGQFDVLYCSLKNLDAHTKLLGGESVNGLSSLQEELLLGDSKRELNQYVLLQEHPTDLLRLSAGRKCPDQGNAFHNALVECIRLHRFILHCSQELENLFSPYCLVKSLQITFQLCLLVFVGVSGTREVLRIVNQLQYLGLTIFELLMFTYCGELLSRHSIRSGDAFWRGAWWKHAHFIRQDILIFLVNSRRAVHVTAGKFYVMDVNRLRSVITQAFSFLTLLQKLAAKKTESEL.

Topologically, residues 1–60 (MASLQFHGNVDADIRYDISLDPARESNLFRLLMGLQLANGTKPSPRLPKWWPKRLEMIGK) are cytoplasmic. The helical transmembrane segment at 61 to 81 (VLPKAYCSMVIFTSLHLGVLF) threads the bilayer. Residues 82–98 (TKTTLDVLPTGELQAIT) are Extracellular-facing. A helical transmembrane segment spans residues 99-119 (DALTMTIIYFFTGYGTIYWCL). Over 120–159 (RSRRLLAYMEHMNREYRHHSLAGVTFVSSHAAFRMSRNFT) the chain is Cytoplasmic. The chain crosses the membrane as a helical span at residues 160–180 (VVWIMSCLLGVISWGVSPLML). At 181-212 (GIRMLPLQCWYPFDALGPGTYTAVYATQLFGQ) the chain is on the extracellular side. The chain crosses the membrane as a helical span at residues 213–233 (IMVGMTFGFGGSLFVTLSLLL). Residues 234 to 286 (LGQFDVLYCSLKNLDAHTKLLGGESVNGLSSLQEELLLGDSKRELNQYVLLQE) are Cytoplasmic-facing. Residues 287–307 (HPTDLLRLSAGRKCPDQGNAF) traverse the membrane as a helical segment. Over 308-334 (HNALVECIRLHRFILHCSQELENLFSP) the chain is Extracellular. A helical membrane pass occupies residues 335 to 355 (YCLVKSLQITFQLCLLVFVGV). Over 356–367 (SGTREVLRIVNQ) the chain is Cytoplasmic. Residues 368-388 (LQYLGLTIFELLMFTYCGELL) form a helical membrane-spanning segment. At 389-467 (SRHSIRSGDA…LAAKKTESEL (79 aa)) the chain is on the extracellular side.

The protein belongs to the insect chemoreceptor superfamily. Heteromeric odorant receptor channel (TC 1.A.69) family. Or2a subfamily. In terms of assembly, interacts with Orco. Complexes exist early in the endomembrane system in olfactory sensory neurons (OSNs), coupling these complexes to the conserved ciliary trafficking pathway. In terms of tissue distribution, expressed in 15% of the 120 sensory neurons within the maxillary palp.

Its subcellular location is the cell membrane. Its function is as follows. Odorant receptor which mediates acceptance or avoidance behavior, depending on its substrates. The odorant receptor repertoire encodes a large collection of odor stimuli that vary widely in identity, intensity, and duration. May form a complex with Orco to form odorant-sensing units, providing sensitive and prolonged odorant signaling and calcium permeability. The polypeptide is Putative odorant receptor 85e (Or85e) (Drosophila melanogaster (Fruit fly)).